Reading from the N-terminus, the 167-residue chain is U-scoloptoxin(08)-Er5b (167 aa).

An N-terminal signal peptide occupies residues 1 to 22 (MKTNCEFPLLCLLIVLVANVEG). The propeptide occupies 23 to 94 (EVEDTGLKMV…KRLWRNWERR (72 aa)). RLWRNWE repeat units follow at residues 34 to 40 (RLWRNWE), 61 to 67 (RLWRNWE), and 86 to 92 (RLWRNWE). Residue Gln95 is modified to Pyrrolidone carboxylic acid. One copy of the RLWRNWE 4; approximate repeat lies at 107 to 113 (ELWRNWE). Positions 112–118 (WEDLKRR) are excised as a propeptide. Gln119 is modified (pyrrolidone carboxylic acid). Residues 134–140 (RLWRNWE) form an RLWRNWE 5 repeat. Positions 139–167 (WEDNHATLRKRSADSLSRQKRLGKERGKE) are excised as a propeptide. A disordered region spans residues 147-167 (RKRSADSLSRQKRLGKERGKE).

Belongs to the scoloptoxin-08 family. In terms of tissue distribution, expressed by the venom gland.

It localises to the secreted. The chain is U-scoloptoxin(08)-Er5b from Ethmostigmus rubripes (Giant centipede).